The sequence spans 970 residues: Insulin-degrading enzyme-like 1, peroxisomal (970 aa).

Zn(2+) is bound at residue His69. The active-site Proton acceptor is the Glu72. Position 73 (His73) interacts with Zn(2+). Residue Glu143 is part of the active site. Glu150 serves as a coordination point for Zn(2+).

It belongs to the peptidase M16 family. It depends on Zn(2+) as a cofactor.

The protein resides in the peroxisome. Its function is as follows. Peptidase that might be involved in pathogen or wound response. Not required for peroxisome biogenesis, indole-3-butyric acid (IBA) metabolism, fatty acid beta-oxidation or degradation of glyoxylate cycle enzymes during seedling development. This Arabidopsis thaliana (Mouse-ear cress) protein is Insulin-degrading enzyme-like 1, peroxisomal (PXM16).